Reading from the N-terminus, the 365-residue chain is P2Y purinoceptor 4 (365 aa).

The Extracellular portion of the chain corresponds to 1–34; that stretch reads MASTESSLLRSLGLSPGPGSSEVELDCWFDEDFK. Residues 35-61 traverse the membrane as a helical segment; sequence FILLPVSYAVVFVLGLGLNAPTLWLFI. Residues 62–72 lie on the Cytoplasmic side of the membrane; it reads FRLRPWDATAT. A helical membrane pass occupies residues 73 to 95; it reads YMFHLALSDTLYVLSLPTLIYYY. Topologically, residues 96–112 are extracellular; it reads AAHNHWPFGTEICKFVR. A disulfide bond links C108 and C185. A helical transmembrane segment spans residues 113–131; the sequence is FLFYWNLYCSVLFLTCISV. Topologically, residues 132–154 are cytoplasmic; sequence HRYLGICHPLRALRWGRPRLAGL. Residues 155–174 traverse the membrane as a helical segment; that stretch reads LCLAVWLVVAGCLVPNLFFV. The Extracellular segment spans residues 175–196; it reads TTSNKGTTVLCHDTTRPEEFDH. A helical membrane pass occupies residues 197-222; the sequence is YVHFSSAVMGLLFGVPCLVTLVCYGL. Residues 223-246 are Cytoplasmic-facing; sequence MARRLYQPLPGSAQSSSRLRSLRT. The helical transmembrane segment at 247-269 threads the bilayer; sequence IAVVLTVFAVCFVPFHITRTIYY. The Extracellular segment spans residues 270 to 287; sequence LARLLEADCRVLNIVNVV. A helical membrane pass occupies residues 288-309; the sequence is YKVTRPLASANSCLDPVLYLLT. At 310–365 the chain is on the cytoplasmic side; it reads GDKYRRQLRQLCGGGKPQPRTAASSLALVSLPEDSSCRWAATPQDSSCSTPRADRL. 2 positions are modified to phosphoserine: S333 and S334.

The protein belongs to the G-protein coupled receptor 1 family. In terms of processing, phosphorylation of Ser-333 and Ser-334 is a key step in agonist-dependent desensitization and loss of surface P2RY4. This phosphorylation does not involve PKC, nor other calcium activated kinases. As to expression, pancreas.

The protein resides in the cell membrane. In terms of biological role, receptor for UTP and UDP coupled to G-proteins that activate a phosphatidylinositol-calcium second messenger system. Not activated by ATP or ADP. The protein is P2Y purinoceptor 4 (P2RY4) of Homo sapiens (Human).